A 397-amino-acid chain; its full sequence is Acetyl-CoA acetyltransferase (397 aa).

The active-site Acyl-thioester intermediate is cysteine 95. Tyrosine 187 and lysine 230 together coordinate CoA. Tyrosine 187 contributes to the K(+) binding site. K(+)-binding residues include alanine 246, glycine 247, and alanine 249. Serine 250 is a CoA binding site. A K(+)-binding site is contributed by valine 347. Active-site proton acceptor residues include histidine 351 and cysteine 379.

This sequence belongs to the thiolase-like superfamily. Thiolase family.

The protein localises to the peroxisome. It carries out the reaction 2 acetyl-CoA = acetoacetyl-CoA + CoA. Functionally, essential for n-decane utilization. The protein is Acetyl-CoA acetyltransferase (PAT1) of Yarrowia lipolytica (strain CLIB 122 / E 150) (Yeast).